Here is a 300-residue protein sequence, read N- to C-terminus: Junctional adhesion molecule A (300 aa).

The signal sequence occupies residues 1–26 (MGTEGKAGSKLLFLFTSMILGSLVQG). The Extracellular segment spans residues 27 to 238 (KGSVYSPQTA…MEAVELNVGG (212 aa)). Ig-like V-type domains lie at 28–122 (GSVY…GEVS) and 134–228 (PTVS…EAVR). 2 cysteine pairs are disulfide-bonded: Cys-49/Cys-108 and Cys-152/Cys-212. A glycan (N-linked (GlcNAc...) asparagine) is linked at Asn-185. The helical transmembrane segment at 239–259 (IVAAVLVTLILLGLLIFGIWF) threads the bilayer. Residues 260 to 300 (AYSRGYFERTKKGTAPGKKVIYSQPSARSEGEFKQTSSFLV) are Cytoplasmic-facing. 3 positions are modified to phosphoserine: Ser-282, Ser-285, and Ser-288.

Belongs to the immunoglobulin superfamily. In terms of assembly, interacts with the ninth PDZ domain of MPDZ. Interacts with the first PDZ domain of PARD3. The association between PARD3 and PARD6B probably disrupts this interaction. Interacts with ITGAL (via I-domain). Interacts with CD151. N-glycosylated.

The protein localises to the cell junction. The protein resides in the tight junction. It localises to the cell membrane. In terms of biological role, seems to play a role in epithelial tight junction formation. Appears early in primordial forms of cell junctions and recruits PARD3. The association of the PARD6-PARD3 complex may prevent the interaction of PARD3 with JAM1, thereby preventing tight junction assembly. Plays a role in regulating monocyte transmigration involved in integrity of epithelial barrier. Ligand for integrin alpha-L/beta-2 involved in memory T-cell and neutrophil transmigration. The polypeptide is Junctional adhesion molecule A (F11r) (Rattus norvegicus (Rat)).